The chain runs to 226 residues: MSDISLSQLLEAGVHFGHKAYRWNPKMFPYIYSEVNNIHILDLVQSATLLKEANLYLESAARENKTFLFVGTKRQASTLIAQEAKRCDSYYVNHRWLGGMLTNWSTLKERIAHLKDLEQQEANNTFDLLTKKEGALRRKELKKLRRHLDGIKDMKNLPDIAIVIDQKRETTAIRECRKLGIPVVSILDTNCDPDLVDIPIPGNDDAVRSIKLILKSLTDSILIGKS.

It belongs to the universal ribosomal protein uS2 family.

The protein resides in the plastid. The protein localises to the chloroplast. In Phaeodactylum tricornutum (strain CCAP 1055/1), this protein is Small ribosomal subunit protein uS2c (rps2).